Consider the following 175-residue polypeptide: Translation initiation factor IF-3 (175 aa).

This sequence belongs to the IF-3 family. In terms of assembly, monomer.

It is found in the cytoplasm. Its function is as follows. IF-3 binds to the 30S ribosomal subunit and shifts the equilibrium between 70S ribosomes and their 50S and 30S subunits in favor of the free subunits, thus enhancing the availability of 30S subunits on which protein synthesis initiation begins. The protein is Translation initiation factor IF-3 of Staphylococcus aureus (strain MRSA252).